The chain runs to 147 residues: Large ribosomal subunit protein uL13 (147 aa).

This sequence belongs to the universal ribosomal protein uL13 family. As to quaternary structure, part of the 50S ribosomal subunit.

Its function is as follows. This protein is one of the early assembly proteins of the 50S ribosomal subunit, although it is not seen to bind rRNA by itself. It is important during the early stages of 50S assembly. The polypeptide is Large ribosomal subunit protein uL13 (Mycolicibacterium paratuberculosis (strain ATCC BAA-968 / K-10) (Mycobacterium paratuberculosis)).